Here is a 203-residue protein sequence, read N- to C-terminus: Large ribosomal subunit protein eL15 (203 aa).

The disordered stretch occupies residues 166–203 (ATGKKSRGINKGHRYNNTRSGRRHTWKRQNTQSYWRYR). The span at 169–192 (KKSRGINKGHRYNNTRSGRRHTWK) shows a compositional bias: basic residues. The segment covering 193–203 (RQNTQSYWRYR) has biased composition (polar residues).

This sequence belongs to the eukaryotic ribosomal protein eL15 family.

This chain is Large ribosomal subunit protein eL15 (rpl15), found in Aspergillus niger.